Reading from the N-terminus, the 156-residue chain is ATP synthase subunit b (156 aa).

The chain crosses the membrane as a helical span at residues 7–29; the sequence is LLGQAISFALFVWFCIKFVWPPL.

Belongs to the ATPase B chain family. F-type ATPases have 2 components, F(1) - the catalytic core - and F(0) - the membrane proton channel. F(1) has five subunits: alpha(3), beta(3), gamma(1), delta(1), epsilon(1). F(0) has three main subunits: a(1), b(2) and c(10-14). The alpha and beta chains form an alternating ring which encloses part of the gamma chain. F(1) is attached to F(0) by a central stalk formed by the gamma and epsilon chains, while a peripheral stalk is formed by the delta and b chains.

It is found in the cell inner membrane. Its function is as follows. F(1)F(0) ATP synthase produces ATP from ADP in the presence of a proton or sodium gradient. F-type ATPases consist of two structural domains, F(1) containing the extramembraneous catalytic core and F(0) containing the membrane proton channel, linked together by a central stalk and a peripheral stalk. During catalysis, ATP synthesis in the catalytic domain of F(1) is coupled via a rotary mechanism of the central stalk subunits to proton translocation. Functionally, component of the F(0) channel, it forms part of the peripheral stalk, linking F(1) to F(0). This is ATP synthase subunit b from Shewanella sp. (strain W3-18-1).